Here is a 284-residue protein sequence, read N- to C-terminus: Tropomyosin (284 aa).

Residues 1-284 (MDAIKKKMQA…DMTFTELIGN (284 aa)) are a coiled coil.

Belongs to the tropomyosin family. In terms of assembly, homodimer.

Functionally, tropomyosin, in association with the troponin complex, plays a central role in the calcium dependent regulation of muscle contraction. The chain is Tropomyosin from Blattella germanica (German cockroach).